The primary structure comprises 163 residues: Large ribosomal subunit protein uL11 (163 aa).

It belongs to the universal ribosomal protein uL11 family. In terms of assembly, part of the ribosomal stalk of the 50S ribosomal subunit. Interacts with L10 and the large rRNA to form the base of the stalk. L10 forms an elongated spine to which L12 dimers bind in a sequential fashion forming a multimeric L10(L12)X complex.

Functionally, forms part of the ribosomal stalk which helps the ribosome interact with GTP-bound translation factors. The chain is Large ribosomal subunit protein uL11 from Thermococcus onnurineus (strain NA1).